A 150-amino-acid polypeptide reads, in one-letter code: Large ribosomal subunit protein uL11 (150 aa).

Belongs to the universal ribosomal protein uL11 family. As to quaternary structure, part of the ribosomal stalk of the 50S ribosomal subunit. Interacts with L10 and the large rRNA to form the base of the stalk. L10 forms an elongated spine to which L12 dimers bind in a sequential fashion forming a multimeric L10(L12)X complex. Post-translationally, one or more lysine residues are methylated.

Forms part of the ribosomal stalk which helps the ribosome interact with GTP-bound translation factors. This Ureaplasma parvum serovar 3 (strain ATCC 27815 / 27 / NCTC 11736) protein is Large ribosomal subunit protein uL11.